The primary structure comprises 238 residues: Ribosomal RNA small subunit methyltransferase G (238 aa).

Residues Gly77, Phe82, 128-129 (AE), and Arg147 each bind S-adenosyl-L-methionine.

The protein belongs to the methyltransferase superfamily. RNA methyltransferase RsmG family.

The protein localises to the cytoplasm. Specifically methylates the N7 position of guanine in position 535 of 16S rRNA. This chain is Ribosomal RNA small subunit methyltransferase G, found in Exiguobacterium sp. (strain ATCC BAA-1283 / AT1b).